An 89-amino-acid polypeptide reads, in one-letter code: Small ribosomal subunit protein uS15 (89 aa).

The protein belongs to the universal ribosomal protein uS15 family. Part of the 30S ribosomal subunit. Forms a bridge to the 50S subunit in the 70S ribosome, contacting the 23S rRNA.

One of the primary rRNA binding proteins, it binds directly to 16S rRNA where it helps nucleate assembly of the platform of the 30S subunit by binding and bridging several RNA helices of the 16S rRNA. In terms of biological role, forms an intersubunit bridge (bridge B4) with the 23S rRNA of the 50S subunit in the ribosome. In Lactobacillus gasseri (strain ATCC 33323 / DSM 20243 / BCRC 14619 / CIP 102991 / JCM 1131 / KCTC 3163 / NCIMB 11718 / NCTC 13722 / AM63), this protein is Small ribosomal subunit protein uS15.